Reading from the N-terminus, the 358-residue chain is Peptide chain release factor 1 (358 aa).

Q233 is subject to N5-methylglutamine.

It belongs to the prokaryotic/mitochondrial release factor family. In terms of processing, methylated by PrmC. Methylation increases the termination efficiency of RF1.

The protein resides in the cytoplasm. Its function is as follows. Peptide chain release factor 1 directs the termination of translation in response to the peptide chain termination codons UAG and UAA. The polypeptide is Peptide chain release factor 1 (Agathobacter rectalis (strain ATCC 33656 / DSM 3377 / JCM 17463 / KCTC 5835 / VPI 0990) (Eubacterium rectale)).